Reading from the N-terminus, the 477-residue chain is Glycogen synthase 1 (477 aa).

K15 contributes to the ADP-alpha-D-glucose binding site.

It belongs to the glycosyltransferase 1 family. Bacterial/plant glycogen synthase subfamily.

The catalysed reaction is [(1-&gt;4)-alpha-D-glucosyl](n) + ADP-alpha-D-glucose = [(1-&gt;4)-alpha-D-glucosyl](n+1) + ADP + H(+). It functions in the pathway glycan biosynthesis; glycogen biosynthesis. Functionally, synthesizes alpha-1,4-glucan chains using ADP-glucose. The sequence is that of Glycogen synthase 1 (glgA1) from Synechocystis sp. (strain ATCC 27184 / PCC 6803 / Kazusa).